The following is a 212-amino-acid chain: Translation initiation factor IF-3 (212 aa).

Residues 168 to 212 are disordered; sequence MAPKAPASPKKDKADRPEGDAGDTDMAAPAPAPAAAPETESAPSA. Residues 176–186 are compositionally biased toward basic and acidic residues; it reads PKKDKADRPEG. Over residues 194-212 the composition is skewed to low complexity; that stretch reads AAPAPAPAAAPETESAPSA.

This sequence belongs to the IF-3 family. As to quaternary structure, monomer.

It is found in the cytoplasm. Its function is as follows. IF-3 binds to the 30S ribosomal subunit and shifts the equilibrium between 70S ribosomes and their 50S and 30S subunits in favor of the free subunits, thus enhancing the availability of 30S subunits on which protein synthesis initiation begins. The polypeptide is Translation initiation factor IF-3 (Deinococcus radiodurans (strain ATCC 13939 / DSM 20539 / JCM 16871 / CCUG 27074 / LMG 4051 / NBRC 15346 / NCIMB 9279 / VKM B-1422 / R1)).